The chain runs to 102 residues: Exocrine gland-secreted peptide 1 (102 aa).

A signal peptide spans Met1–Gly22. A disulfide bridge links Cys63 with Cys95.

Belongs to the exocrine gland-secreted peptide family. Monomer. Expressed in the extraorbital lacrimal gland from where it is secreted into tears.

It localises to the secreted. Functionally, male-specific phermone which is recognized by the Vmn2r116/V2rp5 receptor in the vomeronasal organ (VNO) and enhances female sexual receptive behavior (lordosis) upon male mounting, resulting in successful copulation. The chain is Exocrine gland-secreted peptide 1 from Mus musculus (Mouse).